Consider the following 230-residue polypeptide: Sodium channel modifier 1 (230 aa).

S2 carries the phosphoserine modification. A Bipartite nuclear localization signal motif is present at residues 4–20; the sequence is KREGDDWSQLNVLKKRR. The Matrin-type zinc-finger motif lies at 42–74; it reads FACAICPHRPVLDTLAMLTAHRAGKKHLSSLQL. K67 participates in a covalent cross-link: Glycyl lysine isopeptide (Lys-Gly) (interchain with G-Cter in SUMO2). Disordered stretches follow at residues 76 to 106, 129 to 186, and 200 to 230; these read YGKKQPGKERKQNPKHQNELRREETKAEAPL, RRKY…SPTR, and GWIPDGRGRWVKDENVEFDSDEEEPPDLPLD. Positions 81-102 are enriched in basic and acidic residues; that stretch reads PGKERKQNPKHQNELRREETKA. S144 bears the Phosphoserine mark. The segment covering 164-174 has biased composition (low complexity); sequence PAAGPQAEESA. S183 is subject to Phosphoserine. The tract at residues 188 to 230 is required for interaction with LUC7L2; it reads RALDHYLTLRSSGWIPDGRGRWVKDENVEFDSDEEEPPDLPLD. A compositionally biased stretch (basic and acidic residues) spans 205 to 214; that stretch reads GRGRWVKDEN. The segment covering 215 to 230 has biased composition (acidic residues); it reads VEFDSDEEEPPDLPLD. A Phosphoserine modification is found at S219.

As to quaternary structure, component of the minor spliceosome, which splices U12-type introns. Within this complex, interacts with RNF113A, as well as with SF3B1/SF3b155, SF3B2/SF3b145, SF3B3/SF3b130 and CDC5L. May interact with LUC7L2 and SNRNP70.

It is found in the nucleus. The protein localises to the nucleoplasm. Its subcellular location is the nucleus speckle. In terms of biological role, as a component of the minor spliceosome, involved in the splicing of U12-type introns in pre-mRNAs. Plays a role in the regulation of primary cilia length and Hedgehog signaling. The polypeptide is Sodium channel modifier 1 (SCNM1) (Homo sapiens (Human)).